The primary structure comprises 382 residues: 8-amino-7-oxononanoate synthase (382 aa).

Substrate contacts are provided by arginine 21 and histidine 131. Pyridoxal 5'-phosphate-binding residues include serine 178, histidine 206, and threonine 232. Position 235 is an N6-(pyridoxal phosphate)lysine (lysine 235). Threonine 349 provides a ligand contact to substrate.

Belongs to the class-II pyridoxal-phosphate-dependent aminotransferase family. BioF subfamily. In terms of assembly, homodimer. Requires pyridoxal 5'-phosphate as cofactor.

The enzyme catalyses 6-carboxyhexanoyl-[ACP] + L-alanine + H(+) = (8S)-8-amino-7-oxononanoate + holo-[ACP] + CO2. The protein operates within cofactor biosynthesis; biotin biosynthesis. In terms of biological role, catalyzes the decarboxylative condensation of pimeloyl-[acyl-carrier protein] and L-alanine to produce 8-amino-7-oxononanoate (AON), [acyl-carrier protein], and carbon dioxide. In Serratia marcescens, this protein is 8-amino-7-oxononanoate synthase.